The primary structure comprises 216 residues: Large ribosomal subunit protein uL4 (216 aa).

The tract at residues 51-78 (KGRSEVHGSNTKPYKQKGTGRARRGDKK) is disordered. Over residues 64–76 (YKQKGTGRARRGD) the composition is skewed to basic residues.

It belongs to the universal ribosomal protein uL4 family. Part of the 50S ribosomal subunit.

Functionally, one of the primary rRNA binding proteins, this protein initially binds near the 5'-end of the 23S rRNA. It is important during the early stages of 50S assembly. It makes multiple contacts with different domains of the 23S rRNA in the assembled 50S subunit and ribosome. Forms part of the polypeptide exit tunnel. This Treponema pallidum (strain Nichols) protein is Large ribosomal subunit protein uL4.